A 443-amino-acid polypeptide reads, in one-letter code: Exodeoxyribonuclease 7 large subunit (443 aa).

Belongs to the XseA family. Heterooligomer composed of large and small subunits.

It localises to the cytoplasm. It carries out the reaction Exonucleolytic cleavage in either 5'- to 3'- or 3'- to 5'-direction to yield nucleoside 5'-phosphates.. Its function is as follows. Bidirectionally degrades single-stranded DNA into large acid-insoluble oligonucleotides, which are then degraded further into small acid-soluble oligonucleotides. This is Exodeoxyribonuclease 7 large subunit from Legionella pneumophila (strain Lens).